Here is a 191-residue protein sequence, read N- to C-terminus: D-glycero-beta-D-manno-heptose-1,7-bisphosphate 7-phosphatase (191 aa).

Asp-11 serves as the catalytic Nucleophile. Residues Asp-11 and Asp-13 each contribute to the Mg(2+) site. Substrate-binding positions include 11–13, 19–22, and 53–56; these read DRD, DHGY, and TNQS. Asp-13 serves as the catalytic Proton donor. Positions 92, 94, 107, and 109 each coordinate Zn(2+). Residue 110-111 participates in substrate binding; it reads RK. 2 residues coordinate Mg(2+): Asp-136 and Lys-137. Lys-137 lines the substrate pocket.

The protein belongs to the GmhB family. In terms of assembly, monomer. Mg(2+) is required as a cofactor. It depends on Zn(2+) as a cofactor.

Its subcellular location is the cytoplasm. The enzyme catalyses D-glycero-beta-D-manno-heptose 1,7-bisphosphate + H2O = D-glycero-beta-D-manno-heptose 1-phosphate + phosphate. It participates in nucleotide-sugar biosynthesis; ADP-L-glycero-beta-D-manno-heptose biosynthesis; ADP-L-glycero-beta-D-manno-heptose from D-glycero-beta-D-manno-heptose 7-phosphate: step 2/4. The protein operates within bacterial outer membrane biogenesis; LPS core biosynthesis. Functionally, converts the D-glycero-beta-D-manno-heptose 1,7-bisphosphate intermediate into D-glycero-beta-D-manno-heptose 1-phosphate by removing the phosphate group at the C-7 position. The polypeptide is D-glycero-beta-D-manno-heptose-1,7-bisphosphate 7-phosphatase (gmhB) (Escherichia coli O157:H7).